Here is a 186-residue protein sequence, read N- to C-terminus: Dihydrofolate reductase (186 aa).

The 179-residue stretch at 2-180 folds into the DHFR domain; that stretch reads RLNVVVAVSE…FTFKFCVYDV (179 aa). NADP(+) contacts are provided by residues Ala8 and 14-20; that span reads GIGKGGG. A substrate-binding site is contributed by 28–33; it reads DMEFFK. An NADP(+)-binding site is contributed by 51 to 53; that stretch reads RVT. Position 67 (Arg67) interacts with substrate. Residues 73-75 and 112-119 contribute to the NADP(+) site; these read SST and GGYRLYKE.

Belongs to the dihydrofolate reductase family. Monomer.

It carries out the reaction (6S)-5,6,7,8-tetrahydrofolate + NADP(+) = 7,8-dihydrofolate + NADPH + H(+). The protein operates within cofactor biosynthesis; tetrahydrofolate biosynthesis; 5,6,7,8-tetrahydrofolate from 7,8-dihydrofolate: step 1/1. Its function is as follows. Key enzyme in folate metabolism. Contributes to the de novo mitochondrial thymidylate biosynthesis pathway. Catalyzes an essential reaction for de novo glycine and purine synthesis, and for DNA precursor synthesis. In Schistosoma mansoni (Blood fluke), this protein is Dihydrofolate reductase.